Here is a 190-residue protein sequence, read N- to C-terminus: GTP cyclohydrolase 1 (190 aa).

3 residues coordinate Zn(2+): Cys80, His83, and Cys151.

This sequence belongs to the GTP cyclohydrolase I family. As to quaternary structure, toroid-shaped homodecamer, composed of two pentamers of five dimers.

The enzyme catalyses GTP + H2O = 7,8-dihydroneopterin 3'-triphosphate + formate + H(+). It functions in the pathway cofactor biosynthesis; 7,8-dihydroneopterin triphosphate biosynthesis; 7,8-dihydroneopterin triphosphate from GTP: step 1/1. This chain is GTP cyclohydrolase 1 (folE), found in Rickettsia prowazekii (strain Madrid E).